Consider the following 355-residue polypeptide: Type II methyltransferase M.MthZI (355 aa).

The protein belongs to the N(4)/N(6)-methyltransferase family. N(4) subfamily.

The catalysed reaction is a 2'-deoxycytidine in DNA + S-adenosyl-L-methionine = an N(4)-methyl-2'-deoxycytidine in DNA + S-adenosyl-L-homocysteine + H(+). Functionally, a beta subtype methylase that recognizes the double-stranded sequence 5'-CTAG-3', methylates C-1 on both strands, and protects the DNA from cleavage by the MthZI endonuclease. This is Type II methyltransferase M.MthZI from Methanothermobacter thermautotrophicus (Methanobacterium thermoformicicum).